The chain runs to 233 residues: Lipid A 4'-phosphatase (233 aa).

M1 is a topological domain (cytoplasmic). The chain crosses the membrane as a helical span at residues L2–I22. Residues Y23–T60 are Extracellular-facing. A helical membrane pass occupies residues V61–Y81. Over Q82–Q94 the chain is Cytoplasmic. Residues K95–L115 traverse the membrane as a helical segment. The Extracellular segment spans residues K116–N149. Residues C150 to V170 traverse the membrane as a helical segment. Residues P171 to Y176 are Cytoplasmic-facing. The chain crosses the membrane as a helical span at residues A177–G197. Topologically, residues A198–Y200 are extracellular. The helical transmembrane segment at L201–L221 threads the bilayer. At T222–I233 the chain is on the cytoplasmic side.

Belongs to the lipid A LpxF 4'-phosphatase family.

The protein resides in the cell inner membrane. Its pathway is bacterial outer membrane biogenesis; LPS lipid A biosynthesis. Removes the 4'-phosphate moiety from lipid IV(A) (a tetraacylated precursor of lipid A). The protein is Lipid A 4'-phosphatase of Rhizobium leguminosarum.